A 171-amino-acid polypeptide reads, in one-letter code: uncharacterized protein (171 aa).

A signal peptide spans methionine 1–serine 24. Topologically, residues isoleucine 25–cysteine 70 are extracellular. Residues leucine 71–phenylalanine 91 form a helical membrane-spanning segment. The Cytoplasmic portion of the chain corresponds to arginine 92 to histidine 140. Residues isoleucine 141 to isoleucine 161 traverse the membrane as a helical segment. The Extracellular segment spans residues asparagine 162–glutamine 171.

The protein resides in the membrane. This is an uncharacterized protein from Saccharomyces cerevisiae (strain ATCC 204508 / S288c) (Baker's yeast).